A 90-amino-acid polypeptide reads, in one-letter code: Large ribosomal subunit protein bL31 (90 aa).

The tract at residues 71-90 (KVKKFPSNADNQKEPAEEQE) is disordered. Basic and acidic residues predominate over residues 81–90 (NQKEPAEEQE).

Belongs to the bacterial ribosomal protein bL31 family. Type A subfamily. As to quaternary structure, part of the 50S ribosomal subunit.

Its function is as follows. Binds the 23S rRNA. This is Large ribosomal subunit protein bL31 (rpmE) from Aster yellows witches'-broom phytoplasma (strain AYWB).